Here is a 397-residue protein sequence, read N- to C-terminus: Probable sugar efflux transporter (397 aa).

The next 12 helical transmembrane spans lie at 15 to 35 (VIVM…PVAL), 51 to 71 (GLMI…CMLM), 80 to 100 (LLIS…FAWN), 103 to 123 (VLLI…SITA), 137 to 157 (QALG…LPLG), 169 to 189 (TFTL…RLLP), 209 to 229 (PMLI…FTAY), 246 to 266 (KATA…VLFS), 277 to 297 (LLSS…VSGI), 299 to 319 (GAIF…SLAM), 333 to 353 (VATA…ALIG), and 365 to 385 (IGYV…LMFL).

It belongs to the major facilitator superfamily. SotB (TC 2.A.1.2) family.

The protein resides in the cell inner membrane. Functionally, involved in the efflux of sugars. The physiological role may be the reduction of the intracellular concentration of toxic sugars or sugar metabolites. The polypeptide is Probable sugar efflux transporter (Mannheimia succiniciproducens (strain KCTC 0769BP / MBEL55E)).